A 310-amino-acid chain; its full sequence is Protoheme IX farnesyltransferase 2 (310 aa).

9 consecutive transmembrane segments (helical) span residues 25 to 45, 49 to 69, 98 to 118, 121 to 141, 145 to 165, 176 to 196, 222 to 242, 245 to 265, and 277 to 297; these read PGII…AAKG, LVLM…GCAI, HVLL…ALFT, LALL…SLYM, SVYG…VGYC, VILL…IAIF, IVLY…AGYT, AFMA…LKGY, and QVFG…ALDF.

This sequence belongs to the UbiA prenyltransferase family. Protoheme IX farnesyltransferase subfamily.

The protein localises to the cell inner membrane. It carries out the reaction heme b + (2E,6E)-farnesyl diphosphate + H2O = Fe(II)-heme o + diphosphate. It functions in the pathway porphyrin-containing compound metabolism; heme O biosynthesis; heme O from protoheme: step 1/1. Its function is as follows. Converts heme B (protoheme IX) to heme O by substitution of the vinyl group on carbon 2 of heme B porphyrin ring with a hydroxyethyl farnesyl side group. The polypeptide is Protoheme IX farnesyltransferase 2 (Shewanella sp. (strain ANA-3)).